A 331-amino-acid polypeptide reads, in one-letter code: ABSCISIC ACID-INSENSITIVE 5-like protein 1 (331 aa).

Serine 40 and serine 98 each carry phosphoserine. Threonine 143 is modified (phosphothreonine). The 64-residue stretch at 247–310 folds into the bZIP domain; sequence MERRQRRMIK…RQEIISRSKQ (64 aa). Residues 249-268 form a basic motif region; the sequence is RRQRRMIKNRESAARSRARR. Residues 275 to 289 are leucine-zipper; that stretch reads LELELNNLTEENTKL. A compositionally biased stretch (basic and acidic residues) spans 296 to 320; the sequence is NEKKRRQEIISRSKQVTKEKSGDKL. Residues 296–331 form a disordered region; it reads NEKKRRQEIISRSKQVTKEKSGDKLRKIRRMASAGW.

The protein belongs to the bZIP family. ABI5 subfamily. DNA-binding heterodimer with AREB3/DPBF3 or EEL/DPBF4. Interacts with the AFP proteins AFP1, AFP2 and AFP3. Predominantly expressed in seeds.

It localises to the nucleus. Functionally, could participate in abscisic acid-regulated gene expression during seed development. In Arabidopsis thaliana (Mouse-ear cress), this protein is ABSCISIC ACID-INSENSITIVE 5-like protein 1 (DPBF2).